The following is a 610-amino-acid chain: Elongation factor 4 (610 aa).

The region spanning 11–193 (KYIRNFSIVA…QIVTKIPAPA (183 aa)) is the tr-type G domain. Residues 23-28 (DHGKST) and 140-143 (NKID) contribute to the GTP site.

Belongs to the TRAFAC class translation factor GTPase superfamily. Classic translation factor GTPase family. LepA subfamily.

It localises to the cell membrane. The enzyme catalyses GTP + H2O = GDP + phosphate + H(+). In terms of biological role, required for accurate and efficient protein synthesis under certain stress conditions. May act as a fidelity factor of the translation reaction, by catalyzing a one-codon backward translocation of tRNAs on improperly translocated ribosomes. Back-translocation proceeds from a post-translocation (POST) complex to a pre-translocation (PRE) complex, thus giving elongation factor G a second chance to translocate the tRNAs correctly. Binds to ribosomes in a GTP-dependent manner. The chain is Elongation factor 4 from Levilactobacillus brevis (strain ATCC 367 / BCRC 12310 / CIP 105137 / JCM 1170 / LMG 11437 / NCIMB 947 / NCTC 947) (Lactobacillus brevis).